A 126-amino-acid polypeptide reads, in one-letter code: Chemocyanin (126 aa).

Positions 1–30 (MAQGSGSAERALVLGVVLVFLVFNCEVAES) are cleaved as a signal peptide. One can recognise a Phytocyanin domain in the interval 31 to 126 (VVYTVGDGGG…GGLKIAVTAA (96 aa)). Residues H69, C109, and H114 each contribute to the Cu cation site. C82 and C115 form a disulfide bridge.

In terms of tissue distribution, strongly expressed in stigma and style and to a lesser extent in leaves, ovary and petals. Not detected in pollen tubes, mature anthers or roots.

Functionally, diffusible chemotropic factor that induces pollen tube chemotropism. This Lilium longiflorum (Trumpet lily) protein is Chemocyanin.